The following is a 478-amino-acid chain: Glutamate--tRNA ligase (478 aa).

The 'HIGH' region signature appears at 9 to 19 (PSPTGLLHIGT). The 'KMSKS' region signature appears at 248 to 252 (KLSKR). ATP is bound at residue Lys251.

Belongs to the class-I aminoacyl-tRNA synthetase family. Glutamate--tRNA ligase type 1 subfamily. In terms of assembly, monomer.

The protein resides in the cytoplasm. The catalysed reaction is tRNA(Glu) + L-glutamate + ATP = L-glutamyl-tRNA(Glu) + AMP + diphosphate. Functionally, catalyzes the attachment of glutamate to tRNA(Glu) in a two-step reaction: glutamate is first activated by ATP to form Glu-AMP and then transferred to the acceptor end of tRNA(Glu). The protein is Glutamate--tRNA ligase of Prochlorococcus marinus subsp. pastoris (strain CCMP1986 / NIES-2087 / MED4).